Here is a 127-residue protein sequence, read N- to C-terminus: Photosystem II extrinsic protein U (127 aa).

The N-terminal stretch at 1–31 (MSRLFRRLSTLLLCSLLVLGVWLTQPLSVQA) is a signal peptide.

This sequence belongs to the PsbU family. In terms of assembly, PSII is composed of 1 copy each of membrane proteins PsbA, PsbB, PsbC, PsbD, PsbE, PsbF, PsbH, PsbI, PsbJ, PsbK, PsbL, PsbM, PsbT, PsbX, PsbY, PsbZ, Psb30/Ycf12, peripheral proteins PsbO, CyanoQ (PsbQ), PsbU, PsbV and a large number of cofactors. It forms dimeric complexes.

The protein resides in the cellular thylakoid membrane. One of the extrinsic, lumenal subunits of photosystem II (PSII). PSII is a light-driven water plastoquinone oxidoreductase, using light energy to abstract electrons from H(2)O, generating a proton gradient subsequently used for ATP formation. The extrinsic proteins stabilize the structure of photosystem II oxygen-evolving complex (OEC), the ion environment of oxygen evolution and protect the OEC against heat-induced inactivation. The sequence is that of Photosystem II extrinsic protein U from Synechococcus sp. (strain RCC307).